Reading from the N-terminus, the 354-residue chain is MKIFVINPGSTSTKIALFIDEKPVWAAGAHHTADDLSEFHHVNEQYAYRKDFVLRLLAEADIPLDFDAVIARGGLLKPTPGGVYAINEQMKHDLLNARMEHACNLGALIADEIARECHCPAYIADPEVVDELQPAARLTGIPEIERISIFHALNSKAVSRKYAASIGKHYEELNLIVVHLGGGISVGAHCKGRVIDVNNALNGEGPFSPERAGTIPADQLAELCFSGKYTLKQIKKMLNGKGGLTAHLGMNDVVTIARKASEGEEPYKGVLDAMLYTVAKQAGAMYVTLRGQVDAIILTGGIAHSDYCVGILKEQIDYLAPVVLMPGEDEMGSLAYNALGALKGELPLQVYRPE.

This sequence belongs to the acetokinase family.

Its subcellular location is the cytoplasm. It carries out the reaction butanoate + ATP = butanoyl phosphate + ADP. This Phocaeicola vulgatus (strain ATCC 8482 / DSM 1447 / JCM 5826 / CCUG 4940 / NBRC 14291 / NCTC 11154) (Bacteroides vulgatus) protein is Probable butyrate kinase.